The primary structure comprises 492 residues: GDP-Man:Man(3)GlcNAc(2)-PP-Dol alpha-1,2-mannosyltransferase (492 aa).

Over 1 to 19 (MAADTGSWCVYAVLRFFYS) the chain is Lumenal. A helical transmembrane segment spans residues 20-40 (LFFPGLMICGVLCVYLVIGLW). Topologically, residues 41–233 (VIRWHLQRKK…SRNALLSKAK (193 aa)) are cytoplasmic. The segment at residues 234-254 (LIYYYLFAFVYGLVGSCSDIV) is an intramembrane region (helical). Residues 255–399 (MVNSSWTLNH…IGLHTMWNEH (145 aa)) are Cytoplasmic-facing. The helical intramembrane region spans 400–420 (FGIGVVECMAAGTVILAHNSG). The Cytoplasmic segment spans residues 421–492 (GPKLDIVIPH…FLCSMEKLLT (72 aa)).

The protein belongs to the glycosyltransferase group 1 family. Glycosyltransferase 4 subfamily.

It is found in the endoplasmic reticulum membrane. The catalysed reaction is an alpha-D-Man-(1-&gt;3)-[alpha-D-Man-(1-&gt;6)]-beta-D-Man-(1-&gt;4)-beta-D-GlcNAc-(1-&gt;4)-alpha-D-GlcNAc-diphospho-di-trans,poly-cis-dolichol + 2 GDP-alpha-D-mannose = an alpha-D-Man-(1-&gt;2)-alpha-D-Man-(1-&gt;2)-alpha-D-Man-(1-&gt;3)-[alpha-D-Man-(1-&gt;6)]-beta-D-Man-(1-&gt;4)-beta-D-GlcNAc-(1-&gt;4)-alpha-D-GlcNAc-diphospho-di-trans,poly-cis-dolichol + 2 GDP + 2 H(+). It participates in protein modification; protein glycosylation. GDP-Man:Man(3)GlcNAc(2)-PP-Dol alpha-1,2-mannosyltransferase that operates in the biosynthetic pathway of dolichol-linked oligosaccharides, the glycan precursors employed in protein asparagine (N)-glycosylation. The assembly of dolichol-linked oligosaccharides begins on the cytosolic side of the endoplasmic reticulum membrane and finishes in its lumen. The sequential addition of sugars to dolichol pyrophosphate produces dolichol-linked oligosaccharides containing fourteen sugars, including two GlcNAcs, nine mannoses and three glucoses. Once assembled, the oligosaccharide is transferred from the lipid to nascent proteins by oligosaccharyltransferases. Catalyzes, on the cytoplasmic face of the endoplasmic reticulum, the addition of the fourth and fifth mannose residues to the dolichol-linked oligosaccharide chain, to produce Man(5)GlcNAc(2)-PP-dolichol core oligosaccharide. Man(5)GlcNAc(2)-PP-dolichol is a substrate for ALG3, the following enzyme in the biosynthetic pathway. In Mus musculus (Mouse), this protein is GDP-Man:Man(3)GlcNAc(2)-PP-Dol alpha-1,2-mannosyltransferase.